A 404-amino-acid polypeptide reads, in one-letter code: Cysteine desulfurase IscS (404 aa).

Pyridoxal 5'-phosphate is bound by residues 75–76 (AT), Asn155, Gln183, and 203–205 (SAH). Lys206 is subject to N6-(pyridoxal phosphate)lysine. Thr243 serves as a coordination point for pyridoxal 5'-phosphate. Catalysis depends on Cys328, which acts as the Cysteine persulfide intermediate. Cys328 serves as a coordination point for [2Fe-2S] cluster.

It belongs to the class-V pyridoxal-phosphate-dependent aminotransferase family. NifS/IscS subfamily. As to quaternary structure, homodimer. Forms a heterotetramer with IscU, interacts with other sulfur acceptors. Pyridoxal 5'-phosphate is required as a cofactor.

It localises to the cytoplasm. The enzyme catalyses (sulfur carrier)-H + L-cysteine = (sulfur carrier)-SH + L-alanine. Its pathway is cofactor biosynthesis; iron-sulfur cluster biosynthesis. In terms of biological role, master enzyme that delivers sulfur to a number of partners involved in Fe-S cluster assembly, tRNA modification or cofactor biosynthesis. Catalyzes the removal of elemental sulfur atoms from cysteine to produce alanine. Functions as a sulfur delivery protein for Fe-S cluster synthesis onto IscU, an Fe-S scaffold assembly protein, as well as other S acceptor proteins. The polypeptide is Cysteine desulfurase IscS (Vibrio cholerae serotype O1 (strain ATCC 39541 / Classical Ogawa 395 / O395)).